The primary structure comprises 146 residues: Large ribosomal subunit protein uL15 (146 aa).

Residues 1–13 (MKLNELKPNEGSR) show a composition bias toward basic and acidic residues. Residues 1–54 (MKLNELKPNEGSRRNRKRVGRGTSSGYGKTAGRGQKGQLARTGGKTRLGFEGGQ) form a disordered region. Residues 23 to 35 (TSSGYGKTAGRGQ) show a composition bias toward gly residues.

It belongs to the universal ribosomal protein uL15 family. In terms of assembly, part of the 50S ribosomal subunit.

Its function is as follows. Binds to the 23S rRNA. The sequence is that of Large ribosomal subunit protein uL15 from Lactobacillus gasseri (strain ATCC 33323 / DSM 20243 / BCRC 14619 / CIP 102991 / JCM 1131 / KCTC 3163 / NCIMB 11718 / NCTC 13722 / AM63).